We begin with the raw amino-acid sequence, 1315 residues long: ESX secretion system protein EccC (1315 aa).

Positions 1–11 (MSTVLVRRKER) are enriched in basic residues. Residues 1-21 (MSTVLVRRKERRQPPQMPRGE) are disordered. The Cytoplasmic segment spans residues 1 to 40 (MSTVLVRRKERRQPPQMPRGEILLESPPELPEVVTNSFQN). Residues 41-61 (VLMYLPMAAGSAAMVFTFLNH) form a helical membrane-spanning segment. Over 62-64 (RNT) the chain is Extracellular. A helical membrane pass occupies residues 65–85 (LQLVAGGMFALSMFGMMFGQL). Residues 86 to 1315 (SQQSGERKTK…RLIQTAYRES (1230 aa)) are Cytoplasmic-facing. FtsK domains follow at residues 456–656 (GRPL…MESR) and 813–1004 (RDPY…YESE). 479-486 (GATGSGKS) is an ATP binding site. The active site involves Glu-593. Residues 721-1315 (RPQVVEQPQP…RLIQTAYRES (595 aa)) form a binds EsxB region. Residues 834 to 839 (QTGKST), Thr-1031, 1119 to 1124 (ECGKSN), Gln-1293, and 1310 to 1311 (TA) each bind ATP. The 184-residue stretch at 1099–1282 (LSPVYLDFNT…MSGNKDEGIL (184 aa)) folds into the FtsK 3 domain.

As to quaternary structure, the cytosolic domain can form homodimers. Binds EsxB, which leads to multimerization, however EsxA disassembles the multimers, possibly by making EccC-EsxA-EsxB trimers instead of EccC-EsxB-EsxB-EccC tetramers. Forms a complex with EsxA and EsxB, probably wholly mediated by EsxB.

It is found in the cell membrane. With respect to regulation, esxB binding to the third FtsK domain causes multimerization; a subsequent unknown step relieves the allosteric inhibition of linker 2 on FtsK domain 1, activating the ATPase activity; a mutant EsxB ('Ala-98') does not cause multimers to form. In terms of biological role, part of the ESX specialized secretion system, which exports proteins from the cell including EsxA (ESAT-6) and EsxB (CFP-10). Has weak intrinsic ATPase activity; probably only the first FtsK domain can hydrolyze ATP. Might be the translocase subunit. The polypeptide is ESX secretion system protein EccC (Thermomonospora curvata (strain ATCC 19995 / DSM 43183 / JCM 3096 / KCTC 9072 / NBRC 15933 / NCIMB 10081 / Henssen B9)).